We begin with the raw amino-acid sequence, 518 residues long: Glutamate--cysteine ligase (518 aa).

This sequence belongs to the glutamate--cysteine ligase type 1 family. Type 1 subfamily.

It catalyses the reaction L-cysteine + L-glutamate + ATP = gamma-L-glutamyl-L-cysteine + ADP + phosphate + H(+). The protein operates within sulfur metabolism; glutathione biosynthesis; glutathione from L-cysteine and L-glutamate: step 1/2. This chain is Glutamate--cysteine ligase, found in Klebsiella pneumoniae subsp. pneumoniae (strain ATCC 700721 / MGH 78578).